We begin with the raw amino-acid sequence, 97 residues long: Aspartyl/glutamyl-tRNA(Asn/Gln) amidotransferase subunit C (97 aa).

The protein belongs to the GatC family. In terms of assembly, heterotrimer of A, B and C subunits.

The catalysed reaction is L-glutamyl-tRNA(Gln) + L-glutamine + ATP + H2O = L-glutaminyl-tRNA(Gln) + L-glutamate + ADP + phosphate + H(+). It carries out the reaction L-aspartyl-tRNA(Asn) + L-glutamine + ATP + H2O = L-asparaginyl-tRNA(Asn) + L-glutamate + ADP + phosphate + 2 H(+). In terms of biological role, allows the formation of correctly charged Asn-tRNA(Asn) or Gln-tRNA(Gln) through the transamidation of misacylated Asp-tRNA(Asn) or Glu-tRNA(Gln) in organisms which lack either or both of asparaginyl-tRNA or glutaminyl-tRNA synthetases. The reaction takes place in the presence of glutamine and ATP through an activated phospho-Asp-tRNA(Asn) or phospho-Glu-tRNA(Gln). This is Aspartyl/glutamyl-tRNA(Asn/Gln) amidotransferase subunit C from Prochlorococcus marinus (strain MIT 9301).